We begin with the raw amino-acid sequence, 236 residues long: Ribose-5-phosphate isomerase A (236 aa).

Substrate-binding positions include 28-31 (TGST), 83-86 (DGAD), and 96-99 (KGGG). The active-site Proton acceptor is Glu105. Lys123 provides a ligand contact to substrate.

The protein belongs to the ribose 5-phosphate isomerase family. Homodimer.

The enzyme catalyses aldehydo-D-ribose 5-phosphate = D-ribulose 5-phosphate. It participates in carbohydrate degradation; pentose phosphate pathway; D-ribose 5-phosphate from D-ribulose 5-phosphate (non-oxidative stage): step 1/1. Its function is as follows. Catalyzes the reversible conversion of ribose-5-phosphate to ribulose 5-phosphate. This chain is Ribose-5-phosphate isomerase A, found in Afipia carboxidovorans (strain ATCC 49405 / DSM 1227 / KCTC 32145 / OM5) (Oligotropha carboxidovorans).